The following is an 82-amino-acid chain: Sigma-G-dependent sporulation-specific SASP protein (82 aa).

In Bacillus subtilis (strain 168), this protein is Sigma-G-dependent sporulation-specific SASP protein.